The primary structure comprises 485 residues: Glutamyl-tRNA(Gln) amidotransferase subunit A (485 aa).

Catalysis depends on charge relay system residues lysine 79 and serine 154. The Acyl-ester intermediate role is filled by serine 178.

The protein belongs to the amidase family. GatA subfamily. Heterotrimer of A, B and C subunits.

The catalysed reaction is L-glutamyl-tRNA(Gln) + L-glutamine + ATP + H2O = L-glutaminyl-tRNA(Gln) + L-glutamate + ADP + phosphate + H(+). Its function is as follows. Allows the formation of correctly charged Gln-tRNA(Gln) through the transamidation of misacylated Glu-tRNA(Gln) in organisms which lack glutaminyl-tRNA synthetase. The reaction takes place in the presence of glutamine and ATP through an activated gamma-phospho-Glu-tRNA(Gln). The protein is Glutamyl-tRNA(Gln) amidotransferase subunit A of Staphylococcus epidermidis (strain ATCC 12228 / FDA PCI 1200).